A 348-amino-acid polypeptide reads, in one-letter code: Protein RecA (348 aa).

64–71 (GPESSGKT) contributes to the ATP binding site. Residues 325–335 (YEIDGANKEPL) are compositionally biased toward basic and acidic residues. Residues 325 to 348 (YEIDGANKEPLEETEETLSLLDDE) are disordered. Residues 336–348 (EETEETLSLLDDE) show a composition bias toward acidic residues.

It belongs to the RecA family.

The protein resides in the cytoplasm. Its function is as follows. Can catalyze the hydrolysis of ATP in the presence of single-stranded DNA, the ATP-dependent uptake of single-stranded DNA by duplex DNA, and the ATP-dependent hybridization of homologous single-stranded DNAs. It interacts with LexA causing its activation and leading to its autocatalytic cleavage. In Listeria welshimeri serovar 6b (strain ATCC 35897 / DSM 20650 / CCUG 15529 / CIP 8149 / NCTC 11857 / SLCC 5334 / V8), this protein is Protein RecA.